Reading from the N-terminus, the 194-residue chain is Early growth response protein 1 (194 aa).

3 C2H2-type zinc fingers span residues 1–18, 24–46, and 52–74; these read CDRR…IRIH, FQCR…IRTH, and FACD…TKIH.

The protein belongs to the EGR C2H2-type zinc-finger protein family.

The protein resides in the nucleus. The protein localises to the cytoplasm. In terms of biological role, transcriptional regulator. Recognizes and binds to the DNA sequence 5'-GCG(T/G)GGGCG-3'(EGR-site) in the promoter region of target genes. Binds double-stranded target DNA, irrespective of the cytosine methylation status. Regulates the transcription of numerous target genes, and thereby plays an important role in regulating the response to growth factors, DNA damage, and ischemia. Plays a role in the regulation of cell survival, proliferation and cell death. Mediates responses to ischemia and hypoxia; regulates the expression of proteins that are involved in inflammatory processes. Plays a role in regulating the expression of circadian clock genes. The sequence is that of Early growth response protein 1 (EGR1) from Gallus gallus (Chicken).